A 90-amino-acid chain; its full sequence is Long neurotoxin OH-34 (90 aa).

The signal sequence occupies residues 1 to 20 (KTLLLTLVVVTILCLDLGYT). 5 disulfides stabilise this stretch: Cys23–Cys41, Cys34–Cys62, Cys47–Cys51, Cys66–Cys77, and Cys78–Cys83.

Belongs to the three-finger toxin family. Long-chain subfamily. Type II alpha-neurotoxin sub-subfamily. Expressed by the venom gland.

The protein resides in the secreted. Functionally, binds with high affinity to muscular (alpha-1/CHRNA1) and neuronal (alpha-7/CHRNA7) nicotinic acetylcholine receptor (nAChR) and inhibits acetylcholine from binding to the receptor, thereby impairing neuromuscular and neuronal transmission. The polypeptide is Long neurotoxin OH-34 (Ophiophagus hannah (King cobra)).